Consider the following 211-residue polypeptide: MTKGKIITLEGPDGAGKTSVLEQLVLKLEKDNEQSIVTTREPGGVAISESIRNIILDVNNTEMDFKTELLLYIAARRQHLVEKVLPSLSAGKLVFIDRFIDSSVAYQGEGRGLNKSDIEWLNDFATDGIKPDLTLLFDVPSEIGIARINQNVNREINRLDLEKLEMHQKVRQGYLELAKANPDRIVLIDASKPLDDVVDEAYRVIKERFAH.

An ATP-binding site is contributed by 11–18 (GPDGAGKT).

This sequence belongs to the thymidylate kinase family.

The catalysed reaction is dTMP + ATP = dTDP + ADP. In terms of biological role, phosphorylation of dTMP to form dTDP in both de novo and salvage pathways of dTTP synthesis. The sequence is that of Thymidylate kinase from Streptococcus uberis (strain ATCC BAA-854 / 0140J).